The chain runs to 451 residues: Glyceraldehyde-3-phosphate dehydrogenase B, chloroplastic (451 aa).

The N-terminal 83 residues, 1–83 (MASHAALAPS…AAPVRGETVA (83 aa)), are a transit peptide targeting the chloroplast. NADP(+) contacts are provided by residues 94–95 (RI), D118, and R163. Residues 237–239 (SCT), T268, R283, 296–297 (TG), and R319 each bind D-glyceraldehyde 3-phosphate. The Nucleophile role is filled by C238. N402 provides a ligand contact to NADP(+).

It belongs to the glyceraldehyde-3-phosphate dehydrogenase family. In terms of assembly, tetramer of either four A chains (GAPDH 2) or two A and two B chains (GAPDH 1).

Its subcellular location is the plastid. The protein localises to the chloroplast. The enzyme catalyses D-glyceraldehyde 3-phosphate + phosphate + NADP(+) = (2R)-3-phospho-glyceroyl phosphate + NADPH + H(+). The protein operates within carbohydrate biosynthesis; Calvin cycle. The polypeptide is Glyceraldehyde-3-phosphate dehydrogenase B, chloroplastic (GAPB) (Spinacia oleracea (Spinach)).